Consider the following 138-residue polypeptide: MDNLDKLIRECGVELYDSEIANENGRAIFRVYITKDGGVSLDDCEKVSRLLSPIFDVTPPVSGDYNLEVSSPGLERKLSKPSHFKASVGELVKVQTEAEKFAGRLVKADEESIAVENEEGIFEINISEIKKAKTYLEW.

The protein belongs to the RimP family.

The protein localises to the cytoplasm. Required for maturation of 30S ribosomal subunits. The chain is Ribosome maturation factor RimP from Campylobacter concisus (strain 13826).